The following is a 687-amino-acid chain: Putative metabolite transport protein YDL199C (687 aa).

Residues 1–22 (MKPPLNMSRSNKPLTQEANSSA) are disordered. Residues 1-122 (MKPPLNMSRS…RHSSRVLRTS (122 aa)) are Extracellular-facing. Residues 7 to 22 (MSRSNKPLTQEANSSA) are compositionally biased toward polar residues. Serine 90 bears the Phosphoserine mark. The chain crosses the membrane as a helical span at residues 123-143 (FISFVVLVSSLSGLDQGLISG). Topologically, residues 144-164 (NVMTLSFQKYFHYPLTSPLGN) are cytoplasmic. A helical membrane pass occupies residues 165 to 185 (IVSIVNLGAFMASLFVYSGIL). Residues 186–192 (EPCSRKK) lie on the Extracellular side of the membrane. The chain crosses the membrane as a helical span at residues 193-213 (MLQISTMIYSLGAIVQVLALN). At 214–216 (QWC) the chain is on the cytoplasmic side. Residues 217–237 (LLLGRFLLGVGMGFAFSMVII) traverse the membrane as a helical segment. The Extracellular portion of the chain corresponds to 238–251 (YQFEFPLPCIRKRT). Residues 252–272 (LISIQCVSSVIAYSFGIWINC) form a helical membrane-spanning segment. At 273 to 283 (AFRYLGFAWRY) the chain is on the cytoplasmic side. Residues 284–304 (PLSTHVALGIILNLMSFYLIL) traverse the membrane as a helical segment. Topologically, residues 305–410 (ESPSWLLKQK…MGRGERKSIY (106 aa)) are extracellular. Residues 411–431 (LTGLNALIYSIVILAYVPLVL) form a helical membrane-spanning segment. Over 432 to 439 (RKRKEKTN) the chain is Cytoplasmic. The helical transmembrane segment at 440–460 (VLLGSIVMCALLFTISFTDWF) threads the bilayer. Residues 461 to 469 (PKSTTRYIS) lie on the Extracellular side of the membrane. Residues 470-490 (ILFAVFLFTHFISWDSIGWVM) traverse the membrane as a helical segment. Residues 491–500 (TIELLPHLSQ) lie on the Cytoplasmic side of the membrane. Residues 501 to 521 (APVILLVSNFYWIFKWFVSLI) form a helical membrane-spanning segment. Residues 522 to 533 (TPILIDRLSWKF) are Extracellular-facing. Residues 534–554 (YLIPSLSSFISIIFVLKIFPI) form a helical membrane-spanning segment. The Cytoplasmic segment spans residues 555-687 (ETRDERLDSD…QNSPGDMAVA (133 aa)). Disordered regions lie at residues 561 to 587 (LDSDDDSTGNGSGNHDDVFDDTGSEFS) and 654 to 687 (SFHNRTDPNISDNIAANKPSSGGGQNSPGDMAVA). Residues 660–673 (DPNISDNIAANKPS) are compositionally biased toward polar residues.

The protein belongs to the major facilitator superfamily. Sugar transporter (TC 2.A.1.1) family.

The protein resides in the membrane. In Saccharomyces cerevisiae (strain ATCC 204508 / S288c) (Baker's yeast), this protein is Putative metabolite transport protein YDL199C.